The sequence spans 163 residues: Extracellular giant hemoglobin major globin subunit B2 (163 aa).

The first 16 residues, 1-16 (MIALFVLMGLMAAASA), serve as a signal peptide directing secretion. The Globin domain occupies 19–163 (CCSSEDRANV…RIANGISAGL (145 aa)). A disulfide bridge connects residues cysteine 20 and cysteine 151. Cysteine 83 is a hydrogen sulfide binding site. Histidine 114 is a heme b binding site.

This sequence belongs to the globin family. In terms of assembly, the 400 kDa hemoglobin consists of a spherical 24-mer arranged as a double layer of dome-shaped dodecamers. Each dodecamer is composed of the 3-fold trimer of the tetramer A1-A2-B1-B2 having one intra-tetramer (A1-B2) disulfide bond and one inter-tetramer (B1-B2) disulfide bond per tetramer.

It is found in the secreted. The extracellular giant hemoglobin is able to bind and transport oxygen and hydrosulfide simultaneously and reversibly at two different sites. The protein is Extracellular giant hemoglobin major globin subunit B2 (ghbB2) of Oligobrachia mashikoi (Beard worm).